Consider the following 358-residue polypeptide: Phospho-N-acetylmuramoyl-pentapeptide-transferase (358 aa).

Helical transmembrane passes span 26–46 (AIYATITALMIAFILGPWLID), 70–90 (GTPTMGGTLILLAIVLPTLLW), 94–114 (TNVYVWVTLLVTVGFGAVGFV), 134–154 (MLWLMLIAGTAGVMLYSYPPF), 169–189 (ELGLFYIPFAVLVIVGASNAV), 197–217 (GLAIGPTIIASGTYLLFAYLA), 234–254 (AGELAVLCGAMVGAGLGFLWF), 261–281 (VFMGDVGSLSLGGALGTIAVI), 286–306 (IVLVIVGGIFVVEALSVIVQV), and 335–355 (KIIVRFWIISIILALVALSTL).

Belongs to the glycosyltransferase 4 family. MraY subfamily. Mg(2+) is required as a cofactor.

The protein localises to the cell inner membrane. The enzyme catalyses UDP-N-acetyl-alpha-D-muramoyl-L-alanyl-gamma-D-glutamyl-meso-2,6-diaminopimeloyl-D-alanyl-D-alanine + di-trans,octa-cis-undecaprenyl phosphate = di-trans,octa-cis-undecaprenyl diphospho-N-acetyl-alpha-D-muramoyl-L-alanyl-D-glutamyl-meso-2,6-diaminopimeloyl-D-alanyl-D-alanine + UMP. The protein operates within cell wall biogenesis; peptidoglycan biosynthesis. Its function is as follows. Catalyzes the initial step of the lipid cycle reactions in the biosynthesis of the cell wall peptidoglycan: transfers peptidoglycan precursor phospho-MurNAc-pentapeptide from UDP-MurNAc-pentapeptide onto the lipid carrier undecaprenyl phosphate, yielding undecaprenyl-pyrophosphoryl-MurNAc-pentapeptide, known as lipid I. This chain is Phospho-N-acetylmuramoyl-pentapeptide-transferase, found in Syntrophotalea carbinolica (strain DSM 2380 / NBRC 103641 / GraBd1) (Pelobacter carbinolicus).